Consider the following 199-residue polypeptide: Chaperone protein TorD (199 aa).

The protein belongs to the TorD/DmsD family. TorD subfamily.

The protein resides in the cytoplasm. Functionally, involved in the biogenesis of TorA. Acts on TorA before the insertion of the molybdenum cofactor and, as a result, probably favors a conformation of the apoenzyme that is competent for acquiring the cofactor. This Escherichia coli O7:K1 (strain IAI39 / ExPEC) protein is Chaperone protein TorD.